Consider the following 604-residue polypeptide: Elongation factor 4 (604 aa).

One can recognise a tr-type G domain in the interval 8-190 (KNKRNFSIIA…AIVHRIPAPN (183 aa)). GTP is bound by residues 20–25 (DHGKST) and 137–140 (NKID).

Belongs to the TRAFAC class translation factor GTPase superfamily. Classic translation factor GTPase family. LepA subfamily.

The protein resides in the cell inner membrane. The enzyme catalyses GTP + H2O = GDP + phosphate + H(+). Functionally, required for accurate and efficient protein synthesis under certain stress conditions. May act as a fidelity factor of the translation reaction, by catalyzing a one-codon backward translocation of tRNAs on improperly translocated ribosomes. Back-translocation proceeds from a post-translocation (POST) complex to a pre-translocation (PRE) complex, thus giving elongation factor G a second chance to translocate the tRNAs correctly. Binds to ribosomes in a GTP-dependent manner. This chain is Elongation factor 4, found in Fusobacterium nucleatum subsp. nucleatum (strain ATCC 25586 / DSM 15643 / BCRC 10681 / CIP 101130 / JCM 8532 / KCTC 2640 / LMG 13131 / VPI 4355).